The following is a 293-amino-acid chain: Probable 2-(5''-triphosphoribosyl)-3'-dephosphocoenzyme-A synthase (293 aa).

It belongs to the CitG/MdcB family.

The enzyme catalyses 3'-dephospho-CoA + ATP = 2'-(5''-triphospho-alpha-D-ribosyl)-3'-dephospho-CoA + adenine. In terms of biological role, involved in the formation of 2-(5''-phosphoribosyl)-3'-dephosphocoenzyme-A, the prosthetic group of the acyl-carrier protein of the malonate decarboxylase. In Pseudomonas aeruginosa (strain UCBPP-PA14), this protein is Probable 2-(5''-triphosphoribosyl)-3'-dephosphocoenzyme-A synthase.